Reading from the N-terminus, the 485-residue chain is Ribulose bisphosphate carboxylase large chain (485 aa).

N124 and T174 together coordinate substrate. The active-site Proton acceptor is the K176. Substrate is bound at residue K178. Positions 202, 204, and 205 each coordinate Mg(2+). K202 is modified (N6-carboxylysine). The Proton acceptor role is filled by H294. Substrate is bound by residues R295, H327, and S379.

The protein belongs to the RuBisCO large chain family. Type I subfamily. Heterohexadecamer of 8 large chains and 8 small chains. Mg(2+) serves as cofactor.

The catalysed reaction is 2 (2R)-3-phosphoglycerate + 2 H(+) = D-ribulose 1,5-bisphosphate + CO2 + H2O. It carries out the reaction D-ribulose 1,5-bisphosphate + O2 = 2-phosphoglycolate + (2R)-3-phosphoglycerate + 2 H(+). Its function is as follows. RuBisCO catalyzes two reactions: the carboxylation of D-ribulose 1,5-bisphosphate, the primary event in carbon dioxide fixation, as well as the oxidative fragmentation of the pentose substrate. Both reactions occur simultaneously and in competition at the same active site. This is Ribulose bisphosphate carboxylase large chain from Rhodopseudomonas palustris (strain ATCC BAA-98 / CGA009).